Consider the following 60-residue polypeptide: U-actitoxin-Avd12b (60 aa).

Positions 1–6 (SKEGMS) are cleaved as a signal peptide. Residues 7–12 (YEEPEN) constitute a propeptide that is removed on maturation. The EGF-like domain maps to 14–56 (EGVACTGQYAESFCLNGGTCRYIQSIGEYYCICVGDYTGHRCE). 3 disulfides stabilise this stretch: Cys-18–Cys-33, Cys-27–Cys-44, and Cys-46–Cys-55.

The protein belongs to the EGF domain peptide family.

It is found in the secreted. It localises to the nematocyst. Has both toxic and EGF activity. Its EGF activity consists of rounding cells (morphological change) and inducing tyrosine phosphorylation of the EGFR in A431 cells, but with a lower potency that human EGF. The polypeptide is U-actitoxin-Avd12b (Anemonia viridis (Snakelocks anemone)).